A 699-amino-acid chain; its full sequence is Polyribonucleotide nucleotidyltransferase (699 aa).

Mg(2+) contacts are provided by D493 and D499. The KH domain occupies 560–620 (PLIANIEIDP…NKVNQAIEYI (61 aa)). One can recognise an S1 motif domain in the interval 630–697 (GDMFEGKITR…DSGRIQLGKA (68 aa)).

It belongs to the polyribonucleotide nucleotidyltransferase family. Mg(2+) serves as cofactor.

It localises to the cytoplasm. It carries out the reaction RNA(n+1) + phosphate = RNA(n) + a ribonucleoside 5'-diphosphate. In terms of biological role, involved in mRNA degradation. Catalyzes the phosphorolysis of single-stranded polyribonucleotides processively in the 3'- to 5'-direction. The sequence is that of Polyribonucleotide nucleotidyltransferase from Thermosipho melanesiensis (strain DSM 12029 / CIP 104789 / BI429).